Consider the following 527-residue polypeptide: Palmitoleoyl-protein carboxylesterase NOTUM (527 aa).

The N-terminal stretch at methionine 1–glycine 19 is a signal peptide. N-linked (GlcNAc...) asparagine glycans are attached at residues asparagine 64, asparagine 86, and asparagine 104. Residue serine 203 is the Charge relay system of the active site. Residue asparagine 249 is glycosylated (N-linked (GlcNAc...) asparagine). Active-site charge relay system residues include aspartate 311 and histidine 359. Asparagine 451 is a glycosylation site (N-linked (GlcNAc...) asparagine).

The protein belongs to the pectinacetylesterase family. Notum subfamily. As to expression, expressed in the anterior pole.

The protein localises to the secreted. The enzyme catalyses [Wnt protein]-O-(9Z)-hexadecenoyl-L-serine + H2O = [Wnt protein]-L-serine + (9Z)-hexadecenoate + H(+). In terms of biological role, carboxylesterase that acts as a key negative regulator of the Wnt signaling pathway. Acts by specifically mediating depalmitoleoylation of WNT proteins. Serine palmitoleoylation of WNT proteins is required for efficient binding to frizzled receptors. Promotes head regeneration following amputation by inhibiting the Wnt signaling pathway. In Schmidtea mediterranea (Freshwater planarian flatworm), this protein is Palmitoleoyl-protein carboxylesterase NOTUM.